Consider the following 292-residue polypeptide: Bis(5'-nucleosyl)-tetraphosphatase, symmetrical (292 aa).

This sequence belongs to the Ap4A hydrolase family.

The catalysed reaction is P(1),P(4)-bis(5'-adenosyl) tetraphosphate + H2O = 2 ADP + 2 H(+). Its function is as follows. Hydrolyzes diadenosine 5',5'''-P1,P4-tetraphosphate to yield ADP. The polypeptide is Bis(5'-nucleosyl)-tetraphosphatase, symmetrical (Yersinia enterocolitica serotype O:8 / biotype 1B (strain NCTC 13174 / 8081)).